A 644-amino-acid polypeptide reads, in one-letter code: 3D-(3,5/4)-trihydroxycyclohexane-1,2-dione hydrolase (644 aa).

A thiamine diphosphate-binding site is contributed by Glu-65. Residues 442–522 (SLPGDLQRMW…INVLLFDNSG (81 aa)) are thiamine pyrophosphate binding. The Mg(2+) site is built by Asp-493 and Asn-520.

This sequence belongs to the TPP enzyme family. Mg(2+) serves as cofactor. The cofactor is thiamine diphosphate.

It catalyses the reaction 3D-3,5/4-trihydroxycyclohexane-1,2-dione + H2O = 5-deoxy-D-glucuronate + H(+). It functions in the pathway polyol metabolism; myo-inositol degradation into acetyl-CoA; acetyl-CoA from myo-inositol: step 3/7. Involved in the cleavage of the C1-C2 bond of 3D-(3,5/4)-trihydroxycyclohexane-1,2-dione (THcHDO) to yield 5-deoxy-glucuronate (5DG). The protein is 3D-(3,5/4)-trihydroxycyclohexane-1,2-dione hydrolase of Bacillus thuringiensis (strain Al Hakam).